The chain runs to 601 residues: Sodium-dependent phosphate transport protein 2C (601 aa).

Topologically, residues 1–75 (MPNSLAGGQV…RRVVSSFLKA (75 aa)) are cytoplasmic. Position 4 is a phosphoserine (serine 4). Residues 76–96 (CGLLGSLYFFICSLDILSSAF) traverse the membrane as a helical segment. Over 97–110 (QLLGSKMAGDIFKD) the chain is Extracellular. The helical transmembrane segment at 111-131 (NVVLSNPVAGLVIGVLVTVLV) threads the bilayer. At 132 to 187 (QSSSTSSSIVVSMVASKLLTVQVSVPIIMGVNVGTSITSTLVSMAQSGDRDEFQRA) the chain is on the cytoplasmic side. Residues 188 to 208 (FSGSAVHGIFNWLTVLVLLPL) form a helical membrane-spanning segment. Residues 209 to 324 (ESATAALERL…FAGSKLTDLA (116 aa)) lie on the Extracellular side of the membrane. N-linked (GlcNAc...) asparagine glycosylation is found at asparagine 264, asparagine 267, and asparagine 299. Residues cysteine 275 and cysteine 311 are joined by a disulfide bond. A helical membrane pass occupies residues 325–345 (VGFILLAGSLLVLCVCLVLIV). Topologically, residues 346-369 (KLLNSVLKGRIAQAVKTVINADFP) are cytoplasmic. A helical transmembrane segment spans residues 370–390 (FPFGWLSGYLAILVGAGLTFL). Over 391 to 441 (LQSSSVFTAAIVPLMGVGVIDLERAYPLFLGSNIGTTTTALLAALASPADM) the chain is Extracellular. The chain crosses the membrane as a helical span at residues 442-462 (LIFAVQVALIHFFFNLAGILL). The Cytoplasmic portion of the chain corresponds to 463–487 (WYLVPVLRLPIPLAKRFGNLTAQYR). A helical membrane pass occupies residues 488-508 (WVAIVYLLLTFLLLPLAAFGL). Residues 509-512 (SLAG) are Extracellular-facing. Residues 513–533 (GTVLAAVGGPLVGLVLLIILV) form a helical membrane-spanning segment. Residues 534–601 (NVLQQHRPSW…NPQVIASQQL (68 aa)) are Cytoplasmic-facing.

Belongs to the SLC34A transporter family. Expressed only in the kidney.

It is found in the apical cell membrane. It carries out the reaction 2 Na(+)(out) + phosphate(out) = 2 Na(+)(in) + phosphate(in). Involved in actively transporting phosphate into cells via Na(+) cotransport in the renal brush border membrane. The cotransport has a Na(+):Pi stoichiometry of 2:1 and is electroneutral. The polypeptide is Sodium-dependent phosphate transport protein 2C (Slc34a3) (Mus musculus (Mouse)).